A 361-amino-acid chain; its full sequence is uncharacterized protein (361 aa).

Residues 1–17 form the signal peptide; that stretch reads MNLFIYVLLLSIWTSSC. Over 18–47 the chain is Extracellular; the sequence is LDRNESNGSATAVTTHAEFKQTKLQELRRR. N24 carries N-linked (GlcNAc...) asparagine glycosylation. The chain crosses the membrane as a helical span at residues 48–68; sequence LLIIVIGTLITGYMVSCTCLL. The Cytoplasmic portion of the chain corresponds to 69 to 361; the sequence is HYSCDSEEAH…EDIYKNSRNN (293 aa). The segment covering 95–106 has biased composition (polar residues); that stretch reads SSKISFTDSKSP. The tract at residues 95–197 is disordered; sequence SSKISFTDSK…SQVSPSYPEK (103 aa). A compositionally biased stretch (low complexity) spans 144-158; the sequence is PSSQKKPSKPSAPKK. The span at 169–185 shows a compositional bias: basic residues; the sequence is HRTRSPKKAHRQAHAHK.

The protein localises to the membrane. This is an uncharacterized protein from Bos taurus (Bovine).